A 222-amino-acid polypeptide reads, in one-letter code: Protein SHI RELATED SEQUENCE 4 (222 aa).

Zn(2+) contacts are provided by Cys-72, Cys-75, Cys-83, Cys-88, Cys-92, and Cys-99. A DNA-binding region (zn(2)-C6 fungal-type; degenerate) is located at residues 72–99 (CQECGNQAKKGCTHGRCRTCCKSNGLHC). The interval 114-137 (RERQQQLQTPTSNPTGGSGRVGKY) is disordered. Residues 118-128 (QQLQTPTSNPT) show a composition bias toward polar residues. Positions 191–194 (IAGH) match the Required for homo- and heterodimerization motif.

The protein belongs to the SHI protein family. In terms of tissue distribution, expressed in cotyledon tips, leaf primordia, hydathodes, stipules, and lateral root primordia and weakly at the edges of petals and sepals.

Its subcellular location is the nucleus. Its function is as follows. Transcription activator that binds DNA on 5'-ACTCTAC-3' and promotes auxin homeostasis-regulating gene expression (e.g. YUC genes), as well as genes affecting stamen development, cell expansion and timing of flowering. Synergistically with other SHI-related proteins, regulates gynoecium, stamen and leaf development in a dose-dependent manner, controlling apical-basal patterning. Promotes style and stigma formation, and influences vascular development during gynoecium development. May also have a role in the formation and/or maintenance of the shoot apical meristem (SAM). The polypeptide is Protein SHI RELATED SEQUENCE 4 (SRS4) (Arabidopsis thaliana (Mouse-ear cress)).